The chain runs to 771 residues: MDDFERRRELRRQKREEMRLEAERLSYQRNDDDEEEAARERRRRARQERLRQKEEGDVSGEVTEKSEVNAQNSVAEEETKRSTDDEAALLERLARREERRQKRLQEALERQKEFDPTITDGSLSVPSRREVNNVEENEITGKEEKVETRQGRCEIEETETVTKSYQRNNWRQDGEEEGKKEEKDSEEEKPKEVPTEENQVDVAVEKSTDKEEVVETKTLAVNAENDTNAMLEGEQSITDAADKEKEEAEKEREKLEAEEKERLKAEEEKKAAEEKQKAEEEKKAAEERERAKAEEEKRAAEERERAKAEEERKAAEERERAKAEEERKAAEERAKAEEERKAAEERAKAEEERKAAEERAKAEKERKAAEERERAKAEEEKRAAEEKARLEAEKLKEKKKMEEKKAQEEKAQANLLRKQEEDKEAKVEAKKESLPEKLQPTSKKDQVKDNKDKEKAPKEEMKSVWDRKRGVPEQKAQNGERELTTPKLKSTENAFGRSNLKGAANAEAGSEKLKEKQQEAAVELDELKKRREERRKILEEEEQKKKQEEAERKIREEEEKKRMKEEIERRRAEAAEKRQKVPEDGVSEEKKPFKCFSPKGSSLKIEERAEFLNKSAQKSGMKPAHTTAVVSKIDSRLEQYTSAVVGNKAAKPAKPAASDLPVPAEGVRNIKSMWEKGNVFSSPGGTGTPNKETAGLKVGVSSRINEWLTKTPEGNKSPAPKPSDLRPGDVSGKRNLWEKQSVEKPAASSSKVTATGKKSETNGLRQFEKEP.

2 disordered regions span residues Glu-23 to Glu-91 and Leu-104 to Lys-599. The myosin and calmodulin-binding stretch occupies residues Ser-26–Gln-199. Phosphotyrosine is present on Tyr-27. Basic and acidic residues-rich tracts occupy residues Gln-47–Glu-67, Leu-104–Asp-115, Ile-139–Ile-155, Trp-170–Pro-194, Ala-203–Glu-215, Ala-240–Pro-435, Ser-442–Thr-484, Gly-509–Gln-518, and Asp-525–Pro-592. 10 repeat units span residues Glu-251 to Ala-265, Glu-266 to Ala-278, Glu-279 to Ala-291, Glu-294 to Ala-306, Glu-309 to Ala-321, Glu-324 to Ala-336, Glu-337 to Ala-349, Glu-350 to Ala-362, Glu-363 to Ala-375, and Glu-378 to Leu-390. A 10 X 13 AA approximate tandem repeats region spans residues Glu-251–Leu-390. The segment at Glu-523–Lys-580 is tropomyosin-binding. Ser-597 bears the Phosphoserine; by CDK1 mark. Residues Leu-612 to Val-644 form a strong actin-binding region. A tropomyosin-binding region spans residues Lys-622–Lys-632. At Tyr-640 the chain carries Phosphotyrosine. Positions Trp-674–Phe-680 are calmodulin-binding. Residues Lys-676 to Pro-771 are disordered. Polar residues predominate over residues Val-679–Lys-691. Ser-682 bears the Phosphoserine; by CDK1 mark. 2 positions are modified to phosphothreonine; by CDK1: Thr-688 and Thr-711. Position 717 is a phosphoserine; by CDK1 (Ser-717). The span at Ser-723–Val-742 shows a compositional bias: basic and acidic residues. Residues Arg-726 to Val-752 are weak actin-binding.

The protein belongs to the caldesmon family. Phosphorylated in non-muscle cells. Phosphorylation by CDK1 during mitosis causes caldesmon to dissociate from microfilaments. Phosphorylation reduces caldesmon binding to actin, myosin, and calmodulin as well as its inhibition of actomyosin ATPase activity. Phosphorylation also occurs in both quiescent and dividing smooth muscle cells with similar effects on the interaction with actin and calmodulin and on microfilaments reorganization. High-molecular-weight caldesmon (h-caldesmon) is predominantly expressed in smooth muscles, whereas low-molecular-weight caldesmon (l-caldesmon) is widely distributed in non-muscle tissues and cells. Not expressed in skeletal muscle or heart.

The protein localises to the cytoplasm. It is found in the cytoskeleton. Its subcellular location is the myofibril. It localises to the stress fiber. In terms of biological role, actin- and myosin-binding protein implicated in the regulation of actomyosin interactions in smooth muscle and nonmuscle cells (could act as a bridge between myosin and actin filaments). Stimulates actin binding of tropomyosin which increases the stabilization of actin filament structure. In muscle tissues, inhibits the actomyosin ATPase by binding to F-actin. This inhibition is attenuated by calcium-calmodulin and is potentiated by tropomyosin. Interacts with actin, myosin, two molecules of tropomyosin and with calmodulin. Also plays an essential role during cellular mitosis and receptor capping. The chain is Caldesmon (CALD1) from Gallus gallus (Chicken).